We begin with the raw amino-acid sequence, 285 residues long: RNA polymerase sigma factor RpoH (285 aa).

Residues 53-122 (LILSHLRFVV…IHEYVLRNWR (70 aa)) are sigma-70 factor domain-2. Positions 77–80 (DLVQ) match the Interaction with polymerase core subunit RpoC motif. Residues 229-280 (ALASLDERSQHIVRSRWLDDDKATLQDLAEMYGVSAERIRQLEKNAMKKLKM) are sigma-70 factor domain-4. The H-T-H motif DNA-binding region spans 253-272 (LQDLAEMYGVSAERIRQLEK).

It belongs to the sigma-70 factor family. RpoH subfamily. In terms of assembly, interacts with the RNA polymerase core enzyme.

It localises to the cytoplasm. Sigma factors are initiation factors that promote the attachment of RNA polymerase to specific initiation sites and are then released. This sigma factor is involved in regulation of expression of heat shock genes. The protein is RNA polymerase sigma factor RpoH of Vibrio vulnificus (strain CMCP6).